Here is a 213-residue protein sequence, read N- to C-terminus: StAR-related lipid transfer protein 5 (213 aa).

In terms of domain architecture, START spans 1 to 213; it reads MDPALAAQMS…LQKAVKQFHE (213 aa).

Its function is as follows. May be involved in the intracellular transport of sterols or other lipids. May bind cholesterol or other sterols. The polypeptide is StAR-related lipid transfer protein 5 (STARD5) (Pongo abelii (Sumatran orangutan)).